A 34-amino-acid chain; its full sequence is Photosystem I reaction center subunit XII (34 aa).

Residues 5-25 traverse the membrane as a helical segment; the sequence is ISSPEIFIALVVAAHAAILAL.

The protein belongs to the PsaM family.

Its subcellular location is the cellular thylakoid membrane. This Synechococcus sp. (strain CC9902) protein is Photosystem I reaction center subunit XII.